Reading from the N-terminus, the 365-residue chain is Flagellar P-ring protein (365 aa).

The N-terminal stretch at 1 to 20 (MKLPHFFVLAALVLSGAAHA) is a signal peptide.

Belongs to the FlgI family. As to quaternary structure, the basal body constitutes a major portion of the flagellar organelle and consists of four rings (L,P,S, and M) mounted on a central rod.

It localises to the periplasm. Its subcellular location is the bacterial flagellum basal body. Functionally, assembles around the rod to form the L-ring and probably protects the motor/basal body from shearing forces during rotation. The protein is Flagellar P-ring protein of Thiobacillus denitrificans (strain ATCC 25259 / T1).